A 1237-amino-acid polypeptide reads, in one-letter code: Clustered mitochondria protein homolog (1237 aa).

Residues 291 to 535 (DITRSQENCL…RITPLDVAWS (245 aa)) form the Clu domain. Composition is skewed to basic and acidic residues over residues 575–597 (RKTAKREAEKTKAVEAQNEDKAE) and 845–854 (SQIKSQEHSP). Disordered regions lie at residues 575–614 (RKTAKREAEKTKAVEAQNEDKAELLSTSDPGEGENKAVAS) and 845–886 (SQIK…VAAS). TPR repeat units follow at residues 957 to 990 (AKLYHQLSMLYYQTDEKEAAVELARKAVIVTERT), 999 to 1032 (ILSYLNLSLFEHASGNTHTALIYIRHALELWKII), and 1041 to 1074 (ITTMNNAAVMLQHLKKYPDSRKWFEASLTVCEGL). Disordered stretches follow at residues 1152 to 1189 (RLRRTNLSPRMTIGTKPQPQVGQNAPATTNGATSKSIG) and 1201 to 1237 (FIEGGGESRSPRSKQKKRAAASNPKLRGSKQSTVQTA). The span at 1156-1187 (TNLSPRMTIGTKPQPQVGQNAPATTNGATSKS) shows a compositional bias: polar residues.

It belongs to the CLU family. May associate with the eukaryotic translation initiation factor 3 (eIF-3) complex.

Its subcellular location is the cytoplasm. Its function is as follows. mRNA-binding protein involved in proper cytoplasmic distribution of mitochondria. In Ajellomyces capsulatus (strain NAm1 / WU24) (Darling's disease fungus), this protein is Clustered mitochondria protein homolog.